Reading from the N-terminus, the 196-residue chain is Imidazoleglycerol-phosphate dehydratase (196 aa).

This sequence belongs to the imidazoleglycerol-phosphate dehydratase family.

The protein resides in the cytoplasm. It catalyses the reaction D-erythro-1-(imidazol-4-yl)glycerol 3-phosphate = 3-(imidazol-4-yl)-2-oxopropyl phosphate + H2O. The protein operates within amino-acid biosynthesis; L-histidine biosynthesis; L-histidine from 5-phospho-alpha-D-ribose 1-diphosphate: step 6/9. The chain is Imidazoleglycerol-phosphate dehydratase from Chlorobium chlorochromatii (strain CaD3).